The following is a 203-amino-acid chain: Endothelin-1 (203 aa).

A signal peptide spans 1 to 25 (MDYFPMIIALLFVAFQGAPETAVLG). Residues 26–50 (AELSPEAESQGETPSPHASWRPRRS) constitute a propeptide that is removed on maturation. The interval 27 to 48 (ELSPEAESQGETPSPHASWRPR) is disordered. Disulfide bonds link cysteine 53–cysteine 67 and cysteine 55–cysteine 63. The propeptide occupies 83–203 (YGLGSPSRSR…DKKVTHNRTH (121 aa)). The interval 110-124 (CQCASQKDKKCWSFC) is endothelin-like. Residue asparagine 200 is glycosylated (N-linked (GlcNAc...) asparagine).

The protein belongs to the endothelin/sarafotoxin family.

The protein localises to the secreted. Its function is as follows. Endothelins are endothelium-derived vasoconstrictor peptides. Probable ligand for G-protein coupled receptors EDNRA and EDNRB which activates PTK2B, BCAR1, BCAR3 and, GTPases RAP1 and RHOA cascade in glomerular mesangial cells. Also binds the DEAR/FBXW7-AS1 receptor. Promotes mesenteric arterial wall remodeling via activation of ROCK signaling and subsequent colocalization of NFATC3 with F-actin filaments. NFATC3 then translocates to the nucleus where it subsequently promotes the transcription of the smooth muscle hypertrophy and differentiation marker ACTA2. The sequence is that of Endothelin-1 (EDN1) from Sus scrofa (Pig).